We begin with the raw amino-acid sequence, 208 residues long: Putative 3-methyladenine DNA glycosylase (208 aa).

Belongs to the DNA glycosylase MPG family.

In Nitrobacter winogradskyi (strain ATCC 25391 / DSM 10237 / CIP 104748 / NCIMB 11846 / Nb-255), this protein is Putative 3-methyladenine DNA glycosylase.